Reading from the N-terminus, the 218-residue chain is MLKYLIKFYPKILFIIEGTLVTLKYSIIAVILGLVIGMLLAICKVNKNCVLRLFANFYTSIFRGTPLLVQLSIIYFAAPYIISIKFSVFMAGVISFALNSGAYVSEVIRAGINTIDKGQFEAAEALAIPKFLIMKDIILPQAINNIFPSLVNELINLIKESAIISMLGEMDLMRRAQIVSIETYNYFFPMLIAACCYYILVMLISFIAKIIEKKMIVN.

One can recognise an ABC transmembrane type-1 domain in the interval 19–208; that stretch reads TLVTLKYSII…ILVMLISFIA (190 aa). The next 4 membrane-spanning stretches (helical) occupy residues 25-45, 57-79, 86-108, and 187-207; these read YSIIAVILGLVIGMLLAICKV, FYTSIFRGTPLLVQLSIIYFAAP, FSVFMAGVISFALNSGAYVSEVI, and FFPMLIAACCYYILVMLISFI.

Belongs to the binding-protein-dependent transport system permease family. HisMQ subfamily.

The protein resides in the cell inner membrane. Its function is as follows. Part of the binding-protein-dependent transport system for glutamine; probably responsible for the translocation of the substrate across the membrane. This chain is Putative glutamine transport system permease protein GlnP (glnP), found in Rickettsia typhi (strain ATCC VR-144 / Wilmington).